The following is a 44-amino-acid chain: Non-structural protein 7b (44 aa).

Residues Phe-9–Trp-29 form a helical membrane-spanning segment.

The protein localises to the host membrane. This is Non-structural protein 7b from Bat coronavirus HKU3 (BtCoV).